The chain runs to 368 residues: WD repeat-containing protein wdr-5.1 (368 aa).

The tract at residues methionine 1–isoleucine 64 is disordered. Positions proline 16 to proline 42 are enriched in low complexity. WD repeat units follow at residues glycine 77 to threonine 116, glycine 119 to threonine 158, glycine 161 to threonine 200, alanine 203 to threonine 242, aspartate 246 to glutamine 285, glycine 288 to serine 330, and glycine 333 to serine 368.

The sequence is that of WD repeat-containing protein wdr-5.1 from Caenorhabditis briggsae.